A 182-amino-acid polypeptide reads, in one-letter code: ATP-dependent protease subunit HslV (182 aa).

Residue threonine 12 is part of the active site. Residues alanine 167, cysteine 170, and threonine 173 each coordinate Na(+).

This sequence belongs to the peptidase T1B family. HslV subfamily. A double ring-shaped homohexamer of HslV is capped on each side by a ring-shaped HslU homohexamer. The assembly of the HslU/HslV complex is dependent on binding of ATP.

The protein localises to the cytoplasm. The catalysed reaction is ATP-dependent cleavage of peptide bonds with broad specificity.. Allosterically activated by HslU binding. Protease subunit of a proteasome-like degradation complex believed to be a general protein degrading machinery. The polypeptide is ATP-dependent protease subunit HslV (Chlorobium phaeobacteroides (strain DSM 266 / SMG 266 / 2430)).